A 506-amino-acid chain; its full sequence is Cytochrome P450 monooxygenase BOA3 (506 aa).

A helical transmembrane segment spans residues 15–35 (IYLWIGFVLVVLLAYPTYFAI). A heme-binding site is contributed by Cys451.

The protein belongs to the cytochrome P450 family. Heme is required as a cofactor.

It is found in the membrane. Its pathway is polyketide biosynthesis. In terms of biological role, cytochrome P450 monooxygenase; part of the gene cluster A that mediates the biosynthesis of botcinic acid and its botcinin derivatives, acetate-derived polyketides that contribute to virulence when combined with the sesquiterpene botrydial. Botcinic acid and its derivatives have been shown to induce chlorosis and necrosis during host plant infection, but also have antifungal activities. Two polyketide synthases, BOA6 and BOA9, are involved in the biosynthesis of botcinins. BOA6 mediates the formation of the per-methylated tetraketide core by condensation of four units of malonyl-CoA with one unit of acetyl-CoA, which would be methylated in activated methylene groups to yield a bicyclic acid intermediate that could then either be converted to botrylactone derivatives or lose the starter acetate unit through a retro-Claisen type C-C bond cleavage to yield botcinin derivatives. The second polyketide synthase, BOA9, is probably required for the biosynthesis of the tetraketide side chain of botcinins. The methyltransferase (MT) domain within BOA6 is probably responsible for the incorporation of four methyl groups. The trans-enoyl reductase BOA5 might take over the enoyl reductase function of BOA6 that misses an ER domain. The monooxygenases BOA2, BOA3 and BOA4 might be involved in further hydroxylations at C4, C5 and C8, whereas BOA7, close to BOA9, could potentially be involved in the hydroxylation at C4 in the side chain of botcinins. The sequence is that of Cytochrome P450 monooxygenase BOA3 from Botryotinia fuckeliana (strain B05.10) (Noble rot fungus).